Here is a 205-residue protein sequence, read N- to C-terminus: Ribosomal RNA small subunit methyltransferase G (205 aa).

Residues G76, L81, 127–128 (IE), and R140 contribute to the S-adenosyl-L-methionine site.

It belongs to the methyltransferase superfamily. RNA methyltransferase RsmG family.

It is found in the cytoplasm. It carries out the reaction guanosine(527) in 16S rRNA + S-adenosyl-L-methionine = N(7)-methylguanosine(527) in 16S rRNA + S-adenosyl-L-homocysteine. In terms of biological role, specifically methylates the N7 position of guanine in position 527 of 16S rRNA. The protein is Ribosomal RNA small subunit methyltransferase G of Francisella tularensis subsp. novicida (strain U112).